We begin with the raw amino-acid sequence, 282 residues long: Biotin synthase (282 aa).

In terms of domain architecture, Radical SAM core spans M1–R228. C17, C21, and C24 together coordinate [4Fe-4S] cluster. 4 residues coordinate [2Fe-2S] cluster: C61, C96, C154, and R221.

It belongs to the radical SAM superfamily. Biotin synthase family. In terms of assembly, homodimer. It depends on [4Fe-4S] cluster as a cofactor. Requires [2Fe-2S] cluster as cofactor.

The enzyme catalyses (4R,5S)-dethiobiotin + (sulfur carrier)-SH + 2 reduced [2Fe-2S]-[ferredoxin] + 2 S-adenosyl-L-methionine = (sulfur carrier)-H + biotin + 2 5'-deoxyadenosine + 2 L-methionine + 2 oxidized [2Fe-2S]-[ferredoxin]. It functions in the pathway cofactor biosynthesis; biotin biosynthesis; biotin from 7,8-diaminononanoate: step 2/2. In terms of biological role, catalyzes the conversion of dethiobiotin (DTB) to biotin by the insertion of a sulfur atom into dethiobiotin via a radical-based mechanism. The sequence is that of Biotin synthase from Helicobacter pylori (strain Shi470).